The sequence spans 1374 residues: DNA-directed RNA polymerase subunit beta (1374 aa).

It belongs to the RNA polymerase beta chain family. As to quaternary structure, the RNAP catalytic core consists of 2 alpha, 1 beta, 1 beta' and 1 omega subunit. When a sigma factor is associated with the core the holoenzyme is formed, which can initiate transcription.

The catalysed reaction is RNA(n) + a ribonucleoside 5'-triphosphate = RNA(n+1) + diphosphate. Its function is as follows. DNA-dependent RNA polymerase catalyzes the transcription of DNA into RNA using the four ribonucleoside triphosphates as substrates. The sequence is that of DNA-directed RNA polymerase subunit beta from Acidovorax ebreus (strain TPSY) (Diaphorobacter sp. (strain TPSY)).